The sequence spans 95 residues: Co-chaperonin GroES (95 aa).

It belongs to the GroES chaperonin family. Heptamer of 7 subunits arranged in a ring. Interacts with the chaperonin GroEL.

The protein resides in the cytoplasm. Together with the chaperonin GroEL, plays an essential role in assisting protein folding. The GroEL-GroES system forms a nano-cage that allows encapsulation of the non-native substrate proteins and provides a physical environment optimized to promote and accelerate protein folding. GroES binds to the apical surface of the GroEL ring, thereby capping the opening of the GroEL channel. In Caldicellulosiruptor bescii (strain ATCC BAA-1888 / DSM 6725 / KCTC 15123 / Z-1320) (Anaerocellum thermophilum), this protein is Co-chaperonin GroES.